An 82-amino-acid chain; its full sequence is DNA gyrase inhibitor YacG (82 aa).

Residues Cys9, Cys12, Cys27, and Cys31 each contribute to the Zn(2+) site. A disordered region spans residues 44–82 (IGLPHEGDPGDAPVEYLDDRDLTQPSPERQNESFHRYSE). Positions 72–82 (RQNESFHRYSE) are enriched in basic and acidic residues.

The protein belongs to the DNA gyrase inhibitor YacG family. Interacts with GyrB. Requires Zn(2+) as cofactor.

In terms of biological role, inhibits all the catalytic activities of DNA gyrase by preventing its interaction with DNA. Acts by binding directly to the C-terminal domain of GyrB, which probably disrupts DNA binding by the gyrase. The chain is DNA gyrase inhibitor YacG from Rhodopirellula baltica (strain DSM 10527 / NCIMB 13988 / SH1).